We begin with the raw amino-acid sequence, 142 residues long: 3-hydroxyacyl-[acyl-carrier-protein] dehydratase FabZ (142 aa).

Residue histidine 50 is part of the active site.

This sequence belongs to the thioester dehydratase family. FabZ subfamily.

The protein resides in the cytoplasm. The enzyme catalyses a (3R)-hydroxyacyl-[ACP] = a (2E)-enoyl-[ACP] + H2O. Its function is as follows. Involved in unsaturated fatty acids biosynthesis. Catalyzes the dehydration of short chain beta-hydroxyacyl-ACPs and long chain saturated and unsaturated beta-hydroxyacyl-ACPs. In Clostridium tetani (strain Massachusetts / E88), this protein is 3-hydroxyacyl-[acyl-carrier-protein] dehydratase FabZ.